An 83-amino-acid chain; its full sequence is MSDSPSLSPPAPSQGPTTPRKGPPKFKQRQTRQFKSKPPKKGVKGFGDDIPGMEGLGTDITVICPWEAFSHLELHELAQFGII.

Residues 1-54 form a disordered region; the sequence is MSDSPSLSPPAPSQGPTTPRKGPPKFKQRQTRQFKSKPPKKGVKGFGDDIPGME. Positions 22 to 43 are enriched in basic residues; that stretch reads GPPKFKQRQTRQFKSKPPKKGV.

It belongs to the rod/cone cGMP-PDE gamma subunit family. As to quaternary structure, tetramer composed of two catalytic chains (alpha and beta), and two inhibitory chains (gamma).

The catalysed reaction is 3',5'-cyclic GMP + H2O = GMP + H(+). Functionally, participates in processes of transmission and amplification of the visual signal. cGMP-PDEs are the effector molecules in G-protein-mediated phototransduction in vertebrate rods and cones. This Mus musculus (Mouse) protein is Retinal cone rhodopsin-sensitive cGMP 3',5'-cyclic phosphodiesterase subunit gamma (Pde6h).